The following is a 104-amino-acid chain: Large ribosomal subunit protein uL24 (104 aa).

The protein belongs to the universal ribosomal protein uL24 family. In terms of assembly, part of the 50S ribosomal subunit.

Functionally, one of two assembly initiator proteins, it binds directly to the 5'-end of the 23S rRNA, where it nucleates assembly of the 50S subunit. In terms of biological role, one of the proteins that surrounds the polypeptide exit tunnel on the outside of the subunit. This Shewanella baltica (strain OS223) protein is Large ribosomal subunit protein uL24.